A 683-amino-acid chain; its full sequence is Probable metal-nicotianamine transporter YSL3 (683 aa).

14 helical membrane passes run 29–49, 58–78, 97–117, 142–162, 204–224, 265–285, 309–329, 372–392, 404–424, 448–468, 490–510, 553–573, 595–615, and 628–648; these read LVTPRAMAVAVVLSVVICFVG, IVPALNMPASILSFFLLKWLI, MFLLTCIITCLNLALTSGFAT, HVPIGKWIVYLFLVGMTGVLI, VATIFKVFFGSFSWSMFQWFY, IVNFGLFFGAIISWGFLYPFL, VFISVTLIITDGMINFLTLIT, IPIPVPVAAYITCAAISTIAI, LAVLYMVIPVVTFCNTYATGL, PGAVVASLLASGVIVAALHIS, TGQIFGVAVGSILCPCVFLAF, CMTFCVVAFCVTVIIDAVVLV, FFAGSYFTIDMCVGSLLLLAW, and SAVAAGLICGEGLFTLPSALL.

It belongs to the YSL (TC 2.A.67.2) family.

The protein localises to the membrane. Its function is as follows. May be involved in the transport of nicotianamine-chelated metals. The protein is Probable metal-nicotianamine transporter YSL3 (YSL3) of Oryza sativa subsp. japonica (Rice).